The primary structure comprises 340 residues: Ketol-acid reductoisomerase (NADP(+)) (340 aa).

Residues L3–T183 enclose the KARI N-terminal Rossmann domain. NADP(+)-binding positions include F26–Q29, S54, and D84–Q87. Residue H109 is part of the active site. G135 lines the NADP(+) pocket. One can recognise a KARI C-terminal knotted domain in the interval T184–I329. 4 residues coordinate Mg(2+): D192, E196, E228, and E232. S253 contacts substrate.

It belongs to the ketol-acid reductoisomerase family. Requires Mg(2+) as cofactor.

It carries out the reaction (2R)-2,3-dihydroxy-3-methylbutanoate + NADP(+) = (2S)-2-acetolactate + NADPH + H(+). The catalysed reaction is (2R,3R)-2,3-dihydroxy-3-methylpentanoate + NADP(+) = (S)-2-ethyl-2-hydroxy-3-oxobutanoate + NADPH + H(+). Its pathway is amino-acid biosynthesis; L-isoleucine biosynthesis; L-isoleucine from 2-oxobutanoate: step 2/4. The protein operates within amino-acid biosynthesis; L-valine biosynthesis; L-valine from pyruvate: step 2/4. Involved in the biosynthesis of branched-chain amino acids (BCAA). Catalyzes an alkyl-migration followed by a ketol-acid reduction of (S)-2-acetolactate (S2AL) to yield (R)-2,3-dihydroxy-isovalerate. In the isomerase reaction, S2AL is rearranged via a Mg-dependent methyl migration to produce 3-hydroxy-3-methyl-2-ketobutyrate (HMKB). In the reductase reaction, this 2-ketoacid undergoes a metal-dependent reduction by NADPH to yield (R)-2,3-dihydroxy-isovalerate. This is Ketol-acid reductoisomerase (NADP(+)) from Wolinella succinogenes (strain ATCC 29543 / DSM 1740 / CCUG 13145 / JCM 31913 / LMG 7466 / NCTC 11488 / FDC 602W) (Vibrio succinogenes).